Consider the following 588-residue polypeptide: Cyclomaltodextrinase (588 aa).

Residues His-247 and Arg-326 each coordinate substrate. Residue Asp-328 is the Nucleophile of the active site. The active-site Proton donor is the Glu-357. Substrate contacts are provided by residues 423–424 (HD), Asp-468, and Arg-472.

Belongs to the glycosyl hydrolase 13 family. As to quaternary structure, exists as a monomer or a homodimer in solution. Homodimer is more active and stable than the monomer.

It carries out the reaction cyclomaltodextrin + H2O = linear maltodextrin. Its activity is regulated as follows. No metal dependence, but Mn(2+) increases the activity with alpha-cyclodextrin as substrate. No effect on the activity with presence or absence of Ca(2+), Zn(2+), Tween-20 or EDTA. Functionally, hydrolyzes alpha-, beta- and gamma-cyclodextrins with the highest activity with alpha-cyclodextrin (cyclomaltohexaose). Pullulan is the preferred substrate from linear substrates. Maltose is a major product of these reactions. Is also able to hydrolyze maltotriose and acarbose, and transglycosylate their hydrolytic products. Major reaction products of maltotriose and of acarbose are maltose and glucose, and glucose and pseudotrisaccharide, respectively. No activity with glucose or maltose as substrate. This chain is Cyclomaltodextrinase, found in Geobacillus thermopakistaniensis (strain MAS1).